The chain runs to 132 residues: Large ribosomal subunit protein bL21 (132 aa).

A disordered region spans residues 111–132 (AAEKPARKPRAKKTNEVTTDGA).

It belongs to the bacterial ribosomal protein bL21 family. In terms of assembly, part of the 50S ribosomal subunit. Contacts protein L20.

Its function is as follows. This protein binds to 23S rRNA in the presence of protein L20. This chain is Large ribosomal subunit protein bL21, found in Dehalococcoides mccartyi (strain CBDB1).